The following is a 172-amino-acid chain: MLLPNILLTGTPGVGKTTLGKELASKSGLKYINVGDLAREEQLYDGYDEEYDCPILDEDRVVDELDNQMREGGVIVDYHGCDFFPERWFHIVFVLRTDTNVLYERLETRGYNEKKLTDNIQCEIFQVLYEEATASYKEEIVHQLPSNKPEELENNVDQILKWIEQWIKDHNS.

Residues G13, G15, K16, T17, and T18 each coordinate ATP. The NMP stretch occupies residues N33 to L56. Residues N33–L56 are NMPbind. The segment at T108–D118 is LID. Residues R109 and K148 each coordinate ATP.

It belongs to the adenylate kinase family. AK6 subfamily. Monomer and homodimer. Interacts with small ribosomal subunit protein uS11. Not a structural component of 43S pre-ribosomes, but transiently interacts with them by binding to uS11. Interacts with COIL (via C-terminus). Expressed in heart, brain, placenta, lung, liver, skeletal muscle, kidney, pancreas, chorionic villi and the central nervous system.

Its subcellular location is the cytoplasm. It is found in the nucleus. The protein localises to the nucleoplasm. It localises to the cajal body. It catalyses the reaction AMP + ATP = 2 ADP. It carries out the reaction ATP + H2O = ADP + phosphate + H(+). Broad-specificity nucleoside monophosphate (NMP) kinase that catalyzes the reversible transfer of the terminal phosphate group between nucleoside triphosphates and monophosphates. Also has ATPase activity. Involved in the late cytoplasmic maturation steps of the 40S ribosomal particles, specifically 18S rRNA maturation. While NMP activity is not required for ribosome maturation, ATPase activity is. Associates transiently with small ribosomal subunit protein uS11. ATP hydrolysis breaks the interaction with uS11. May temporarily remove uS11 from the ribosome to enable a conformational change of the ribosomal RNA that is needed for the final maturation step of the small ribosomal subunit. Its NMP activity may have a role in nuclear energy homeostasis. AMP and dAMP are the preferred substrates, but CMP and dCMP are also good substrates. IMP is phosphorylated to a much lesser extent. All nucleoside triphosphates ATP, GTP, UTP, CTP, dATP, dCTP, dGTP, and TTP are accepted as phosphate donors. CTP is the best phosphate donor, followed by UTP, ATP, GTP and dCTP. May be involved in regulation of Cajal body (CB) formation. The protein is Adenylate kinase isoenzyme 6 of Homo sapiens (Human).